Here is a 479-residue protein sequence, read N- to C-terminus: ATP-dependent RNA helicase DbpA (479 aa).

The short motif at 2–30 is the Q motif element; sequence SHFKNYQISHDILRALEGLGYTEPTKVQQ. The 171-residue stretch at 33–203 folds into the Helicase ATP-binding domain; that stretch reads IPAALERKDL…RQYMQNPEHI (171 aa). 46–53 is an ATP binding site; that stretch reads SQTGSGKT. The DEAD box motif lies at 151-154; it reads DEAD. The Helicase C-terminal domain maps to 214–374; sequence NIEHAVIQVR…KIEAPSQEEV (161 aa). Positions 404-479 are involved in 23S rRNA binding; that stretch reads MKLYFNGGKK…KQLKVNKANK (76 aa).

It belongs to the DEAD box helicase family. DbpA subfamily. As to quaternary structure, may interact with RNA helicases CshA and CshB.

It is found in the cytoplasm. It carries out the reaction ATP + H2O = ADP + phosphate + H(+). ATPase activity is stimulated by interaction with RNA. Its function is as follows. DEAD-box RNA helicase involved in the assembly of the 50S ribosomal subunit. Has an RNA-dependent ATPase activity, which is specific for 23S rRNA, and a 3' to 5' RNA helicase activity that uses the energy of ATP hydrolysis to destabilize and unwind short rRNA duplexes. This chain is ATP-dependent RNA helicase DbpA, found in Bacillus subtilis (strain 168).